The primary structure comprises 678 residues: DNA ligase (678 aa).

NAD(+) is bound by residues 47 to 51 (DSDYD), 96 to 97 (SL), and E122. Residue K124 is the N6-AMP-lysine intermediate of the active site. R145, E182, K300, and K324 together coordinate NAD(+). The Zn(2+) site is built by C418, C421, C436, and C442. The region spanning 602 to 678 (AYNESFTGKT…ILEDNLKDLL (77 aa)) is the BRCT domain.

It belongs to the NAD-dependent DNA ligase family. LigA subfamily. Mg(2+) serves as cofactor. It depends on Mn(2+) as a cofactor.

The catalysed reaction is NAD(+) + (deoxyribonucleotide)n-3'-hydroxyl + 5'-phospho-(deoxyribonucleotide)m = (deoxyribonucleotide)n+m + AMP + beta-nicotinamide D-nucleotide.. Its function is as follows. DNA ligase that catalyzes the formation of phosphodiester linkages between 5'-phosphoryl and 3'-hydroxyl groups in double-stranded DNA using NAD as a coenzyme and as the energy source for the reaction. It is essential for DNA replication and repair of damaged DNA. The protein is DNA ligase of Francisella tularensis subsp. novicida (strain U112).